The sequence spans 252 residues: Type III pantothenate kinase (252 aa).

6 to 13 (DIGNTNIV) is an ATP binding site. Position 107-110 (107-110 (GADL)) interacts with substrate. The active-site Proton acceptor is the aspartate 109. Aspartate 129 provides a ligand contact to K(+). Residue threonine 132 participates in ATP binding. Threonine 184 is a substrate binding site.

The protein belongs to the type III pantothenate kinase family. In terms of assembly, homodimer. NH4(+) serves as cofactor. K(+) is required as a cofactor.

The protein localises to the cytoplasm. The catalysed reaction is (R)-pantothenate + ATP = (R)-4'-phosphopantothenate + ADP + H(+). Its pathway is cofactor biosynthesis; coenzyme A biosynthesis; CoA from (R)-pantothenate: step 1/5. Functionally, catalyzes the phosphorylation of pantothenate (Pan), the first step in CoA biosynthesis. The sequence is that of Type III pantothenate kinase from Bifidobacterium animalis subsp. lactis (strain AD011).